Here is a 347-residue protein sequence, read N- to C-terminus: Protein-arginine kinase (347 aa).

The region spanning 22–247 is the Phosphagen kinase C-terminal domain; that stretch reads LVVSTRIRLA…EQVIQAERHA (226 aa). ATP-binding positions include 25 to 29, histidine 85, arginine 118, 169 to 173, and 200 to 205; these read STRIR, RASVM, and RGRYGE. The RDXXRA motif of the pArg binding pocket involved in allosteric regulation motif lies at 330–335; the sequence is RDRERA.

It belongs to the ATP:guanido phosphotransferase family.

It catalyses the reaction L-arginyl-[protein] + ATP = N(omega)-phospho-L-arginyl-[protein] + ADP + H(+). With respect to regulation, appears to be allosterically activated by the binding of pArg-containing polypeptides to the pArg-binding pocket localized in the C-terminal domain of McsB. Functionally, catalyzes the specific phosphorylation of arginine residues in proteins. The chain is Protein-arginine kinase from Exiguobacterium sp. (strain ATCC BAA-1283 / AT1b).